The primary structure comprises 651 residues: MTDLEKMREKLQNQINYHNILYYQKSKPEISDAEYDELKKKLAAIEPEAYATQDSVGAPPDERFSKVEHQEPMLSLENAYDEQGVEKFLSKIKRFLIADEIEILCEPKIDGLSFSAIYEDGKFVKAATRGDGFVGEDVTHNVATIKGFPKFLQDVQGRLEVRGEIYISNSDFLKLNENNEFANPRNAAAGSLKQLNANITAKRPLRYFAYSLIGGIEKSQSEVLEKLEKLGFCVNEHRSLTSSLNGMLKFYNEIYDCRYNLDYDIDGIVYKVNDLVLQSRLGSTHKAPRSALAYKFSAIYAKTKLNKIFIQVGRTGVLTPVADLVPVNIGGVLVSRASLHNQDEIKRKDIREGDVVTIKRAGDVIPQIVKVDEGSRHTNMPEFVFPDICPECGSKVQIEGVAVRCPEEFNCKAQIVEKLKHFVSKDAFDIVGLGEKQIKFFYDLELIRQIPDIFILEERLKEFSLKEHHGWGEKSIANLLSAIQSRRVISLDRFIFSLGIRFIGQVVAELLANYYVSYDNWYNSMSSNDVELVGIDGIGEKVAESLKSFFSQERNIKMLNDLTAYLQILPVSSNSSDSFLNNKIIVFTGKLRAMSRGEAKVRAKVLGAKISSSLSTKTDYLIAGEDPGSKYKKAMELGVEILDEEQWNRLC.

NAD(+) contacts are provided by residues 32–36, 75–76, and Glu-106; these read DAEYD and SL. Lys-108 (N6-AMP-lysine intermediate) is an active-site residue. Residues Arg-129, Glu-164, Lys-271, and Lys-295 each contribute to the NAD(+) site. Positions 389, 392, 405, and 411 each coordinate Zn(2+). The BRCT domain maps to 575-651; it reads SSDSFLNNKI…LDEEQWNRLC (77 aa).

The protein belongs to the NAD-dependent DNA ligase family. LigA subfamily. Mg(2+) serves as cofactor. It depends on Mn(2+) as a cofactor.

The catalysed reaction is NAD(+) + (deoxyribonucleotide)n-3'-hydroxyl + 5'-phospho-(deoxyribonucleotide)m = (deoxyribonucleotide)n+m + AMP + beta-nicotinamide D-nucleotide.. Its function is as follows. DNA ligase that catalyzes the formation of phosphodiester linkages between 5'-phosphoryl and 3'-hydroxyl groups in double-stranded DNA using NAD as a coenzyme and as the energy source for the reaction. It is essential for DNA replication and repair of damaged DNA. This Wolbachia pipientis subsp. Culex pipiens (strain wPip) protein is DNA ligase.